The primary structure comprises 365 residues: HLA class I histocompatibility antigen, A alpha chain (365 aa).

An N-terminal signal peptide occupies residues 1-24 (MAVMAPRTLLLLLSGALALTQTWA). Positions 3 to 11 (VMAPRTLLL) are VL9 epitope. The segment at 25 to 114 (GSHSMRYFFT…LRGYYNQSEA (90 aa)) is alpha-1. At 25–308 (GSHSMRYFFT…ELSSQPTIPI (284 aa)) the chain is on the extracellular side. Y31 serves as a coordination point for a peptide antigen. Y83 is subject to Sulfotyrosine. Residues T97 and Y108 each contribute to the a peptide antigen site. N-linked (GlcNAc...) asparagine glycosylation occurs at N110. The tract at residues 115-206 (GSHTIQIMYG…ENGKETLQRT (92 aa)) is alpha-2. C125 and C188 are oxidised to a cystine. A peptide antigen is bound by residues D140, T167, K170, Y183, and Y195. The segment at 207-298 (DPPKTHMTHH…GLPKPLTLRW (92 aa)) is alpha-3. In terms of domain architecture, Ig-like C1-type spans 209–295 (PKTHMTHHPI…QHEGLPKPLT (87 aa)). The cysteines at positions 227 and 283 are disulfide-linked. A connecting peptide region spans residues 299–308 (ELSSQPTIPI). Residues 309-332 (VGIIAGLVLLGAVITGAVVAAVMW) form a helical membrane-spanning segment. Residues 333–365 (RRKSSDRKGGSYTQAASSDSAQGSDVSLTACKV) lie on the Cytoplasmic side of the membrane. Positions 339–365 (RKGGSYTQAASSDSAQGSDVSLTACKV) are disordered. Residue S343 is modified to Phosphoserine. A Phosphotyrosine modification is found at Y344. Over residues 346–359 (QAASSDSAQGSDVS) the composition is skewed to low complexity. Phosphoserine is present on residues S349, S350, S352, S356, and S359.

Belongs to the MHC class I family. Heterotrimer that consists of an alpha chain HLA-A, a beta chain B2M and a peptide (peptide-HLA-A-B2M). Early in biogenesis, HLA-A-B2M dimer interacts with the components of the peptide-loading complex composed of TAPBP, TAP1-TAP2, TAPBPL, PDIA3/ERP57 and CALR. Interacts with TAP1-TAP2 transporter via TAPBP; this interaction is obligatory for the loading of peptide epitopes delivered to the ER by TAP1-TAP2 transporter. Interacts with TAPBPL; TAPBPL binds peptide-free HLA-A-B2M complexes or those loaded with low affinity peptides, likely facilitating peptide exchange for higher affinity peptides. Only optimally assembled peptide-HLA-B2M trimer translocates to the surface of antigen-presenting cells, where it interacts with TCR and CD8 coreceptor on the surface of T cells. HLA-A (via polymorphic alpha-1 and alpha-2 domains) interacts with antigen-specific TCR (via CDR3 domains). One HLA-A molecule (mainly via nonpolymorphic alpha-3 domain) interacts with one CD8A homodimer (via CDR-like loop); this interaction ensures peptide-HLA-A-B2M recognition by CD8-positive T cells only. Alleles A*23:01; A*24:02 and A*32:01 interact (via Bw4 motif) with KIR3DL1 on NK cells; this interaction is direct. In terms of assembly, (Microbial infection) Interacts with HHV-8 MIR1 protein. As to quaternary structure, (Microbial infection) Interacts with HTLV-1 accessory protein p12I. Post-translationally, (Microbial infection) Polyubiquitinated in a post ER compartment by interaction with human herpesvirus 8 MIR1 protein. This targets the protein for rapid degradation via the ubiquitin system. In terms of processing, N-linked glycosylation at Asn-110. As to expression, ubiquitous.

The protein localises to the cell membrane. Its subcellular location is the endoplasmic reticulum membrane. Its function is as follows. Antigen-presenting major histocompatibility complex class I (MHCI) molecule. In complex with B2M/beta 2 microglobulin displays primarily viral and tumor-derived peptides on antigen-presenting cells for recognition by alpha-beta T cell receptor (TCR) on HLA-A-restricted CD8-positive T cells, guiding antigen-specific T cell immune response to eliminate infected or transformed cells. May also present self-peptides derived from the signal sequence of secreted or membrane proteins, although T cells specific for these peptides are usually inactivated to prevent autoreactivity. Both the peptide and the MHC molecule are recognized by TCR, the peptide is responsible for the fine specificity of antigen recognition and MHC residues account for the MHC restriction of T cells. Typically presents intracellular peptide antigens of 8 to 13 amino acids that arise from cytosolic proteolysis via IFNG-induced immunoproteasome or via endopeptidase IDE/insulin-degrading enzyme. Can bind different peptides containing allele-specific binding motifs, which are mainly defined by anchor residues at position 2 and 9. In terms of biological role, allele A*01:01: Presents a restricted peptide repertoire including viral epitopes derived from IAV NP/nucleoprotein (CTELKLSDY), IAV PB1/polymerase basic protein 1 (VSDGGPNLY), HAdV-11 capsid L3/hexon protein (LTDLGQNLLY), SARS-CoV-2 3a/ORF3a (FTSDYYQLY) as well as tumor peptide antigens including MAGE1 (EADPTGHSY), MAGEA3 (EVDPIGHLY) and WT1 (TSEKRPFMCAY), all having in common a canonical motif with a negatively charged Asp or Glu residue at position 3 and a Tyr anchor residue at the C-terminus. A number of HLA-A*01:01-restricted peptides carry a post-translational modification with oxidation and N-terminal acetylation being the most frequent. Fails to present highly immunogenic peptides from the EBV latent antigens. Functionally, allele A*02:01: A major allele in human populations, presents immunodominant viral epitopes derived from IAV M/matrix protein 1 (GILGFVFTL), HIV-1 env (TLTSCNTSV), HIV-1 gag-pol (ILKEPVHGV), HTLV-1 Tax (LLFGYPVYV), HBV C/core antigen (FLPSDFFPS), HCMV UL83/pp65 (NLVPMVATV) as well as tumor peptide antigens including MAGEA4 (GVYDGREHTV), WT1 (RMFPNAPYL) and CTAG1A/NY-ESO-1 (SLLMWITQC), all having in common hydrophobic amino acids at position 2 and at the C-terminal anchors. Allele A*03:01: Presents viral epitopes derived from IAV NP (ILRGSVAHK), HIV-1 nef (QVPLRPMTYK), HIV-1 gag-pol (AIFQSSMTK), SARS-CoV-2 N/nucleoprotein (KTFPPTEPK) as well as tumor peptide antigens including PMEL (LIYRRRLMK), NODAL (HAYIQSLLK), TRP-2 (RMYNMVPFF), all having in common hydrophobic amino acids at position 2 and Lys or Arg anchor residues at the C-terminus. May also display spliced peptides resulting from the ligation of two separate proteasomal cleavage products that are not contiguous in the parental protein. Its function is as follows. Allele A*11:01: Presents several immunodominant epitopes derived from HIV-1 gag-pol and HHV-4 EBNA4, containing the peptide motif with Val, Ile, Thr, Leu, Tyr or Phe at position 2 and Lys anchor residue at the C-terminus. Important in the control of HIV-1, EBV and HBV infections. Presents an immunodominant epitope derived from SARS-CoV-2 N/nucleoprotein (KTFPPTEPK). In terms of biological role, allele A*23:01: Interacts with natural killer (NK) cell receptor KIR3DL1 and may contribute to functional maturation of NK cells and self-nonself discrimination during innate immune response. Functionally, allele A*24:02: Presents viral epitopes derived from HIV-1 nef (RYPLTFGWCF), EBV lytic- and latent-cycle antigens BRLF1 (TYPVLEEMF), BMLF1 (DYNFVKQLF) and LMP2 (IYVLVMLVL), SARS-CoV nucleocapsid/N (QFKDNVILL), as well as tumor peptide antigens including PRAME (LYVDSLFFL), all sharing a common signature motif, namely an aromatic residue Tyr or Phe at position 2 and a nonhydrophobic anchor residue Phe, Leu or Iso at the C-terminus. Interacts with natural killer (NK) cell receptor KIR3DL1 and may contribute to functional maturation of NK cells and self-nonself discrimination during innate immune response. Allele A*26:01: Presents several epitopes derived from HIV-1 gag-pol (EVIPMFSAL, ETKLGKAGY) and env (LVSDGGPNLY), carrying as anchor residues preferentially Glu at position 1, Val or Thr at position 2 and Tyr at the C-terminus. Its function is as follows. Allele A*29:02: Presents peptides having a common motif, namely a Glu residue at position 2 and Tyr or Leu anchor residues at the C-terminus. In terms of biological role, allele A*32:01: Interacts with natural killer (NK) cell receptor KIR3DL1 and may contribute to functional maturation of NK cells and self-nonself discrimination during innate immune response. Functionally, allele A*68:01: Presents viral epitopes derived from IAV NP (KTGGPIYKR) and HIV-1 tat (ITKGLGISYGR), having a common signature motif namely, Val or Thr at position 2 and positively charged residues Arg or Lys at the C-terminal anchor. Allele A*74:01: Presents immunodominant HIV-1 epitopes derived from gag-pol (GQMVHQAISPR, QIYPGIKVR) and rev (RQIHSISER), carrying an aliphatic residue at position 2 and Arg anchor residue at the C-terminus. May contribute to viral load control in chronic HIV-1 infection. The chain is HLA class I histocompatibility antigen, A alpha chain from Homo sapiens (Human).